We begin with the raw amino-acid sequence, 219 residues long: Phosphatidylserine decarboxylase proenzyme (219 aa).

The active-site Schiff-base intermediate with substrate; via pyruvic acid is the serine 188. The residue at position 188 (serine 188) is a Pyruvic acid (Ser); by autocatalysis.

The protein belongs to the phosphatidylserine decarboxylase family. PSD-A subfamily. Heterodimer of a large membrane-associated beta subunit and a small pyruvoyl-containing alpha subunit. Pyruvate serves as cofactor. In terms of processing, is synthesized initially as an inactive proenzyme. Formation of the active enzyme involves a self-maturation process in which the active site pyruvoyl group is generated from an internal serine residue via an autocatalytic post-translational modification. Two non-identical subunits are generated from the proenzyme in this reaction, and the pyruvate is formed at the N-terminus of the alpha chain, which is derived from the carboxyl end of the proenzyme. The post-translation cleavage follows an unusual pathway, termed non-hydrolytic serinolysis, in which the side chain hydroxyl group of the serine supplies its oxygen atom to form the C-terminus of the beta chain, while the remainder of the serine residue undergoes an oxidative deamination to produce ammonia and the pyruvoyl prosthetic group on the alpha chain.

Its subcellular location is the cell membrane. It carries out the reaction a 1,2-diacyl-sn-glycero-3-phospho-L-serine + H(+) = a 1,2-diacyl-sn-glycero-3-phosphoethanolamine + CO2. The protein operates within phospholipid metabolism; phosphatidylethanolamine biosynthesis; phosphatidylethanolamine from CDP-diacylglycerol: step 2/2. Its function is as follows. Catalyzes the formation of phosphatidylethanolamine (PtdEtn) from phosphatidylserine (PtdSer). The polypeptide is Phosphatidylserine decarboxylase proenzyme (Citrifermentans bemidjiense (strain ATCC BAA-1014 / DSM 16622 / JCM 12645 / Bem) (Geobacter bemidjiensis)).